We begin with the raw amino-acid sequence, 210 residues long: BAG family molecular chaperone regulator 2 (210 aa).

An N-acetylalanine modification is found at Ala2. 3 positions are modified to phosphoserine: Ser20, Ser31, and Ser73. Positions 20–60 form a coiled coil; sequence SMADRSSRLLESLDQLELRVEALRDAATAVEQEKEILLEMI. Positions 109–189 constitute a BAG domain; sequence SLKHATRIID…NIDNSDKAIK (81 aa).

As to quaternary structure, binds to the ATPase domain of HSP/HSC70 chaperones. May interact with NWD1. Interacts with HSPA1A (via NBD), HSPA1B (via NBD) and HSPA8. May interact with DNJC9; the interaction seems to be histone-dependent.

Functionally, co-chaperone for HSP70 and HSC70 chaperone proteins. Acts as a nucleotide-exchange factor (NEF) promoting the release of ADP from the HSP70 and HSC70 proteins thereby triggering client/substrate protein release. The chain is BAG family molecular chaperone regulator 2 (Bag2) from Mus musculus (Mouse).